Consider the following 655-residue polypeptide: Putative phagocytic receptor 1c (655 aa).

Residues 1 to 20 (MLNIIVVLLLLFFSNNVIDS) form the signal peptide. A compositionally biased stretch (low complexity) spans 146–173 (SNSKSSEITSPPSSPSSSSSSSSSPSSS). Positions 146-185 (SNSKSSEITSPPSSPSSSSSSSSSPSSSIEEEDDDDTEND) are disordered. Acidic residues predominate over residues 174-183 (IEEEDDDDTE). 9 helical membrane passes run 300 to 320 (IDIIMSFIIVLAVSACLAIIL), 359 to 379 (FSIIIGFGVQIVASLFILMVF), 387 to 407 (IATPGGMAIASILIFSFTGIF), 428 to 448 (SVITTTLIPFTILLLMFIGYF), 461 to 481 (IGTVFFILAMWLLVCVPCSLL), 518 to 538 (MILGGIIPFVIIFTDLSFFLS), 550 to 570 (LSFALTFILMIISIVETNMII), 587 to 607 (LLGPMVTGLYTFIYFIYFGIT), and 619 to 639 (FMFSLVFSILVSLFCSSIGFL).

The protein belongs to the nonaspanin (TM9SF) (TC 9.A.2) family.

The protein localises to the membrane. The chain is Putative phagocytic receptor 1c (phg1c) from Dictyostelium discoideum (Social amoeba).